The following is an 851-amino-acid chain: Glycogen phosphorylase, liver form (851 aa).

The residue at position 2 (Ala2) is an N-acetylalanine. Phosphoserine; by PHK; in form phosphorylase a is present on Ser15. Residues 43–45 (DRN), Tyr76, and Arg310 contribute to the AMP site. At Lys364 the chain carries N6-succinyllysine. The residue at position 470 (Lys470) is an N6-acetyllysine. 3 positions are modified to phosphoserine: Ser524, Ser561, and Ser639. Lys681 is modified (N6-(pyridoxal phosphate)lysine). N6-acetyllysine is present on Lys796.

This sequence belongs to the glycogen phosphorylase family. Homodimer; enzymatically active. Interacts with PPP1R3B; recruits the phosphatase PP1 which dephosphorylates and inactivates PYGL/glycogen phosphorylase. Pyridoxal 5'-phosphate is required as a cofactor. Acetylation, which is up-regulated by glucose and insulin and down-regulated by glucagon, inhibits the glycogen phosphorylase activity by promoting PPP1R3B-mediated recruitment of phosphatase PP1 and Ser-15 dephosphorylation. Post-translationally, phosphorylation at Ser-15 converts inactive phosphorylase b into active phosphorylase a. Dephosphorylation of Ser-15 by phosphatase PP1 inactivates the enzyme.

The protein localises to the cytoplasm. It localises to the cytosol. It carries out the reaction [(1-&gt;4)-alpha-D-glucosyl](n) + phosphate = [(1-&gt;4)-alpha-D-glucosyl](n-1) + alpha-D-glucose 1-phosphate. With respect to regulation, allosterically regulated through the non-covalent binding of metabolites, being activated by AMP and inhibited by ATP, ADP, and glucose-6-phosphate. The activity is also controlled by post-translational modifications including phosphorylation and acetylation. Its function is as follows. Allosteric enzyme that catalyzes the rate-limiting step in glycogen catabolism, the phosphorolytic cleavage of glycogen to produce glucose-1-phosphate, and plays a central role in maintaining cellular and organismal glucose homeostasis. This Ovis aries (Sheep) protein is Glycogen phosphorylase, liver form.